Consider the following 300-residue polypeptide: Ribosomal protein L11 methyltransferase (300 aa).

Threonine 147, glycine 168, aspartate 190, and asparagine 236 together coordinate S-adenosyl-L-methionine.

This sequence belongs to the methyltransferase superfamily. PrmA family.

The protein localises to the cytoplasm. It catalyses the reaction L-lysyl-[protein] + 3 S-adenosyl-L-methionine = N(6),N(6),N(6)-trimethyl-L-lysyl-[protein] + 3 S-adenosyl-L-homocysteine + 3 H(+). In terms of biological role, methylates ribosomal protein L11. The chain is Ribosomal protein L11 methyltransferase from Leptospira interrogans serogroup Icterohaemorrhagiae serovar Lai (strain 56601).